The primary structure comprises 243 residues: 1-(5-phosphoribosyl)-5-[(5-phosphoribosylamino)methylideneamino] imidazole-4-carboxamide isomerase (243 aa).

The Proton acceptor role is filled by D8. The active-site Proton donor is the D129.

This sequence belongs to the HisA/HisF family.

The protein localises to the cytoplasm. The catalysed reaction is 1-(5-phospho-beta-D-ribosyl)-5-[(5-phospho-beta-D-ribosylamino)methylideneamino]imidazole-4-carboxamide = 5-[(5-phospho-1-deoxy-D-ribulos-1-ylimino)methylamino]-1-(5-phospho-beta-D-ribosyl)imidazole-4-carboxamide. It participates in amino-acid biosynthesis; L-histidine biosynthesis; L-histidine from 5-phospho-alpha-D-ribose 1-diphosphate: step 4/9. This is 1-(5-phosphoribosyl)-5-[(5-phosphoribosylamino)methylideneamino] imidazole-4-carboxamide isomerase from Parvibaculum lavamentivorans (strain DS-1 / DSM 13023 / NCIMB 13966).